A 95-amino-acid chain; its full sequence is Small ubiquitin-related modifier 2 (95 aa).

Methionine 1 is covalently cross-linked (Peptide (Met-Gly) (interchain with G-Cter in ubiquitin)). Glycyl lysine isopeptide (Lys-Gly) (interchain with G-Cter in SUMO2) cross-links involve residues lysine 5 and lysine 7. At lysine 11 the chain carries N6-acetyllysine; alternate. Lysine 11 is covalently cross-linked (Glycyl lysine isopeptide (Lys-Gly) (interchain with G-Cter in SUMO); alternate). A Glycyl lysine isopeptide (Lys-Gly) (interchain with G-Cter in SUMO1); alternate cross-link involves residue lysine 11. Lysine 11 participates in a covalent cross-link: Glycyl lysine isopeptide (Lys-Gly) (interchain with G-Cter in SUMO2); alternate. Lysine 11 participates in a covalent cross-link: Glycyl lysine isopeptide (Lys-Gly) (interchain with G-Cter in ubiquitin); alternate. Residues 16-95 enclose the Ubiquitin-like domain; it reads DHINLKVAGQ…VFQQQTGGVY (80 aa). Lysine 21 is covalently cross-linked (Glycyl lysine isopeptide (Lys-Gly) (interchain with G-Cter in SUMO2)). Glycine 93 is covalently cross-linked (Glycyl lysine isopeptide (Gly-Lys) (interchain with K-? in acceptor proteins)). The propeptide occupies 94 to 95; it reads VY.

It belongs to the ubiquitin family. SUMO subfamily. In terms of assembly, interacts with SAE2 and UBE2I. Interacts with ZNF451. Identified in a complex with ZNF451 and UBE2I/UBC9, where one ZNF451 interacts with one UBE2I/UBC9 and two SUMO2 chains, one bound to the UBE2I/UBC9 active site and the other to another region of the same UBE2I/UBC9 molecule. Covalently attached to a number of proteins. Interacts with PELP1. Interacts with USP25; the interaction sumoylates USP25. Interacts with SIMC1, CASP8AP2, RNF111 and SOBP (via SIM domains). Interacts with MTA1. Interacts with HINT1. Interacts with GCNA (via SIM domains); this interaction allows the GCNA recruitment to DPCs sites. In terms of processing, polymeric chains can be formed through Lys-11 cross-linking. Polymeric SUMO2 chains undergo 'Lys-6'-, 'Lys-11'-, 'Lys-48'- and 'Lys-63'-linked polyubiquitination by RNF4. Post-translationally, cleavage of precursor form by SENP1 or SENP2 is necessary for function. Monoubiquitinated N-terminally by UBE2W, which primes it for RNF4-dependent polyubiquitination by the UBE2V1-UBE2N heterodimer.

It localises to the nucleus. The protein localises to the PML body. Functionally, ubiquitin-like protein that can be covalently attached to proteins as a monomer or as a lysine-linked polymer. Covalent attachment via an isopeptide bond to its substrates requires prior activation by the E1 complex SAE1-SAE2 and linkage to the E2 enzyme UBE2I, and can be promoted by an E3 ligase such as PIAS1-4, RANBP2 or CBX4. This post-translational modification on lysine residues of proteins plays a crucial role in a number of cellular processes such as nuclear transport, DNA replication and repair, mitosis and signal transduction. Polymeric SUMO2 chains are also susceptible to polyubiquitination which functions as a signal for proteasomal degradation of modified proteins. Plays a role in the regulation of sumoylation status of SETX. The polypeptide is Small ubiquitin-related modifier 2 (Bos taurus (Bovine)).